Consider the following 316-residue polypeptide: Biotin synthase (316 aa).

The 225-residue stretch at 39 to 263 folds into the Radical SAM core domain; sequence NAIQCSTLLS…LFPKAYVRLS (225 aa). Residues Cys54, Cys58, and Cys61 each contribute to the [4Fe-4S] cluster site. The [2Fe-2S] cluster site is built by Cys98, Cys129, Cys189, and Arg261.

The protein belongs to the radical SAM superfamily. Biotin synthase family. As to quaternary structure, homodimer. The cofactor is [4Fe-4S] cluster. It depends on [2Fe-2S] cluster as a cofactor.

It carries out the reaction (4R,5S)-dethiobiotin + (sulfur carrier)-SH + 2 reduced [2Fe-2S]-[ferredoxin] + 2 S-adenosyl-L-methionine = (sulfur carrier)-H + biotin + 2 5'-deoxyadenosine + 2 L-methionine + 2 oxidized [2Fe-2S]-[ferredoxin]. The protein operates within cofactor biosynthesis; biotin biosynthesis; biotin from 7,8-diaminononanoate: step 2/2. Catalyzes the conversion of dethiobiotin (DTB) to biotin by the insertion of a sulfur atom into dethiobiotin via a radical-based mechanism. The sequence is that of Biotin synthase from Acidithiobacillus ferrooxidans (strain ATCC 23270 / DSM 14882 / CIP 104768 / NCIMB 8455) (Ferrobacillus ferrooxidans (strain ATCC 23270)).